Here is a 175-residue protein sequence, read N- to C-terminus: Sialidase 85-1.3 (175 aa).

Belongs to the glycosyl hydrolase 33 family.

The catalysed reaction is Hydrolysis of alpha-(2-&gt;3)-, alpha-(2-&gt;6)-, alpha-(2-&gt;8)- glycosidic linkages of terminal sialic acid residues in oligosaccharides, glycoproteins, glycolipids, colominic acid and synthetic substrates.. In terms of biological role, developmentally regulated neuraminidase implicated in parasite invasion of cells. May contribute to the pathology during T.cruzi infection by cleaving sialic acid from cells of the immune system. This is Sialidase 85-1.3 (SA85-1.3) from Trypanosoma cruzi.